A 456-amino-acid chain; its full sequence is NADPH-ferredoxin reductase FprA (456 aa).

Ser-14, Glu-40, Leu-48, and Val-84 together coordinate FAD. Residues Arg-110, 155 to 158 (NGNV), 199 to 200 (RR), and Glu-211 contribute to the NADP(+) site. Residues Trp-359 and 366 to 368 (GVI) each bind FAD. Gly-366 contacts NADP(+).

Belongs to the ferredoxin--NADP reductase type 1 family. Monomer. The cofactor is FAD.

The catalysed reaction is 2 reduced [2Fe-2S]-[ferredoxin] + NADP(+) + H(+) = 2 oxidized [2Fe-2S]-[ferredoxin] + NADPH. In terms of biological role, may serve as electron transfer protein and supply electrons to P450 systems. This Mycobacterium tuberculosis (strain CDC 1551 / Oshkosh) protein is NADPH-ferredoxin reductase FprA (fprA).